The chain runs to 73 residues: Mu-sparatoxin-Hv2 (73 aa).

Positions 1 to 20 (MKFAIVITLLLVAFSAVALA) are cleaved as a signal peptide. Residues 21 to 35 (DKSIERAVMDLITAR) constitute a propeptide that is removed on maturation. 3 disulfide bridges follow: C39–C53, C46–C58, and C52–C68. Position 72 is a phenylalanine amide (F72).

The protein belongs to the neurotoxin 10 (Hwtx-1) family. In terms of tissue distribution, expressed by the venom gland.

It localises to the secreted. Functionally, insecticidal toxin that potently and irreversibly blocks voltage-gated sodium channels (Nav) in cockroach dorsal unpaired median (DUM) neurons (IC(50)=833.7 nM). It does not change both the steady-state activation and inactivation curves, suggesting it acts as a pore blocker (possibly at Nav site 1). Does not show toxicity when intraperitoneally injected into mouse. This chain is Mu-sparatoxin-Hv2, found in Heteropoda venatoria (Brown huntsman spider).